We begin with the raw amino-acid sequence, 170 residues long: MSEHNSDIVHPPTKDCITRLKREFQEISKNPIENILVTPSPSNILEWHYVILGASNTPYEGGVYYGQLIFKYNYPLSPPSILMTTPSGRFETQKRLCLSISDYHPESWSPSWSTSSILLGLLSFMSDNEVTAGSIVTTNDEKRILATKSMDFNKKNKTFCELFPYLAMDE.

The region spanning 15 to 165 (DCITRLKREF…NKTFCELFPY (151 aa)) is the UBC core domain. Cysteine 97 acts as the Glycyl thioester intermediate in catalysis.

This sequence belongs to the ubiquitin-conjugating enzyme family.

It carries out the reaction S-ubiquitinyl-[E1 ubiquitin-activating enzyme]-L-cysteine + [E2 ubiquitin-conjugating enzyme]-L-cysteine = [E1 ubiquitin-activating enzyme]-L-cysteine + S-ubiquitinyl-[E2 ubiquitin-conjugating enzyme]-L-cysteine.. Its pathway is protein modification; protein ubiquitination. Functionally, catalyzes the covalent attachment of ubiquitin to other proteins. This Dictyostelium discoideum (Social amoeba) protein is Ubiquitin-conjugating enzyme E2 J2-like.